We begin with the raw amino-acid sequence, 198 residues long: Recombination protein RecR (198 aa).

Residues 57–72 form a C4-type zinc finger; sequence CRVCANIADENPCGIC. The Toprim domain maps to 80–175; that stretch reads GLICVVERPR…RVTRLAFGLP (96 aa).

It belongs to the RecR family.

Functionally, may play a role in DNA repair. It seems to be involved in an RecBC-independent recombinational process of DNA repair. It may act with RecF and RecO. This chain is Recombination protein RecR, found in Desulforudis audaxviator (strain MP104C).